We begin with the raw amino-acid sequence, 814 residues long: Leucine-rich repeat-containing protein 41 (814 aa).

The tract at residues 45 to 54 is interaction with Elongin BC complex; the sequence is ALFELCGRAV. Phosphoserine is present on residues serine 155, serine 276, and serine 326. A disordered region spans residues 265–408; it reads LCGEASRGRA…KKGARTRQGC (144 aa). Phosphothreonine is present on threonine 327. Positions 354–385 are enriched in low complexity; sequence TKRPPSAPATTSSASASSSTSSSKRAPASSAP. At serine 375 the chain carries Phosphoserine. A compositionally biased stretch (basic residues) spans 389–403; it reads PLKRFKRAAGKKGAR. LRR repeat units follow at residues 489-509, 520-532, 533-557, 615-637, 638-661, 703-730, and 733-754; these read WVSL…IFRL, AGCR…LSDL, FSPL…VLSI, SGSL…FGLV, LQTL…LADC, NSTL…VFSE, and SSSL…LLEF.

In terms of assembly, part of a E3 ubiquitin ligase complex with elongin BC complex (ELOB and ELOC), RBX1 and CUL5.

This is Leucine-rich repeat-containing protein 41 (LRRC41) from Bos taurus (Bovine).